The following is a 215-amino-acid chain: Pyridoxine/pyridoxamine 5'-phosphate oxidase (215 aa).

Substrate-binding positions include 9 to 12 and Lys69; that span reads RRDY. Residues 64-69, 79-80, Lys86, and Gln108 each bind FMN; these read RILLLK and FT. Positions 126, 130, and 134 each coordinate substrate. FMN-binding positions include 143 to 144 and Trp188; that span reads QS. Position 194–196 (194–196) interacts with substrate; it reads RLH. An FMN-binding site is contributed by Arg198.

Belongs to the pyridoxamine 5'-phosphate oxidase family. As to quaternary structure, homodimer. FMN is required as a cofactor.

It carries out the reaction pyridoxamine 5'-phosphate + O2 + H2O = pyridoxal 5'-phosphate + H2O2 + NH4(+). The catalysed reaction is pyridoxine 5'-phosphate + O2 = pyridoxal 5'-phosphate + H2O2. Its pathway is cofactor metabolism; pyridoxal 5'-phosphate salvage; pyridoxal 5'-phosphate from pyridoxamine 5'-phosphate: step 1/1. The protein operates within cofactor metabolism; pyridoxal 5'-phosphate salvage; pyridoxal 5'-phosphate from pyridoxine 5'-phosphate: step 1/1. In terms of biological role, catalyzes the oxidation of either pyridoxine 5'-phosphate (PNP) or pyridoxamine 5'-phosphate (PMP) into pyridoxal 5'-phosphate (PLP). This chain is Pyridoxine/pyridoxamine 5'-phosphate oxidase, found in Pseudomonas fluorescens (strain Pf0-1).